Reading from the N-terminus, the 190-residue chain is Elongation factor P-like protein (190 aa).

It belongs to the elongation factor P family.

The sequence is that of Elongation factor P-like protein from Psychromonas ingrahamii (strain DSM 17664 / CCUG 51855 / 37).